Consider the following 635-residue polypeptide: Threonine--tRNA ligase (635 aa).

Residues 1 to 62 (MITITLPDGS…EHDAILRIIT (62 aa)) enclose the TGS domain. A catalytic region spans residues 244–535 (DHRKIGKAQD…LIEHYAGIWP (292 aa)). The Zn(2+) site is built by Cys-335, His-386, and His-512.

The protein belongs to the class-II aminoacyl-tRNA synthetase family. As to quaternary structure, homodimer. Zn(2+) serves as cofactor.

Its subcellular location is the cytoplasm. It carries out the reaction tRNA(Thr) + L-threonine + ATP = L-threonyl-tRNA(Thr) + AMP + diphosphate + H(+). Catalyzes the attachment of threonine to tRNA(Thr) in a two-step reaction: L-threonine is first activated by ATP to form Thr-AMP and then transferred to the acceptor end of tRNA(Thr). Also edits incorrectly charged L-seryl-tRNA(Thr). The polypeptide is Threonine--tRNA ligase (Xylella fastidiosa (strain M23)).